We begin with the raw amino-acid sequence, 352 residues long: Glycerol-1-phosphate dehydrogenase [NAD(P)+] (352 aa).

NAD(+)-binding positions include 98–102 (GKPID) and 120–123 (TAAS). Asp-125 is a substrate binding site. An NAD(+)-binding site is contributed by Ser-129. Substrate is bound at residue Asp-172. Zn(2+) contacts are provided by Asp-172 and His-252. His-256 serves as a coordination point for substrate. Residue His-268 participates in Zn(2+) binding.

The protein belongs to the glycerol-1-phosphate dehydrogenase family. It depends on Zn(2+) as a cofactor.

It is found in the cytoplasm. It catalyses the reaction sn-glycerol 1-phosphate + NAD(+) = dihydroxyacetone phosphate + NADH + H(+). The catalysed reaction is sn-glycerol 1-phosphate + NADP(+) = dihydroxyacetone phosphate + NADPH + H(+). It participates in membrane lipid metabolism; glycerophospholipid metabolism. In terms of biological role, catalyzes the NAD(P)H-dependent reduction of dihydroxyacetonephosphate (DHAP or glycerone phosphate) to glycerol 1-phosphate (G1P). The G1P thus generated is used as the glycerophosphate backbone of phospholipids in the cellular membranes of Archaea. The chain is Glycerol-1-phosphate dehydrogenase [NAD(P)+] from Natronomonas pharaonis (strain ATCC 35678 / DSM 2160 / CIP 103997 / JCM 8858 / NBRC 14720 / NCIMB 2260 / Gabara) (Halobacterium pharaonis).